Consider the following 626-residue polypeptide: tRNA uridine 5-carboxymethylaminomethyl modification enzyme MnmG (626 aa).

13–18 (GGGHAG) provides a ligand contact to FAD. 273–287 (GPRYCPSIEDKIHRF) provides a ligand contact to NAD(+).

It belongs to the MnmG family. As to quaternary structure, homodimer. Heterotetramer of two MnmE and two MnmG subunits. FAD serves as cofactor.

Its subcellular location is the cytoplasm. NAD-binding protein involved in the addition of a carboxymethylaminomethyl (cmnm) group at the wobble position (U34) of certain tRNAs, forming tRNA-cmnm(5)s(2)U34. This is tRNA uridine 5-carboxymethylaminomethyl modification enzyme MnmG from Acinetobacter baylyi (strain ATCC 33305 / BD413 / ADP1).